The chain runs to 226 residues: Ribose-5-phosphate isomerase A (226 aa).

Residues 29–32 (TGST), 84–87 (DGAD), and 97–100 (KGGG) each bind substrate. The active-site Proton acceptor is the Glu-106. Lys-124 is a substrate binding site.

Belongs to the ribose 5-phosphate isomerase family. Homodimer.

It catalyses the reaction aldehydo-D-ribose 5-phosphate = D-ribulose 5-phosphate. It functions in the pathway carbohydrate degradation; pentose phosphate pathway; D-ribose 5-phosphate from D-ribulose 5-phosphate (non-oxidative stage): step 1/1. Catalyzes the reversible conversion of ribose-5-phosphate to ribulose 5-phosphate. This Methanothermobacter thermautotrophicus (strain ATCC 29096 / DSM 1053 / JCM 10044 / NBRC 100330 / Delta H) (Methanobacterium thermoautotrophicum) protein is Ribose-5-phosphate isomerase A.